A 139-amino-acid chain; its full sequence is Large ribosomal subunit protein uL22 (139 aa).

A disordered region spans residues 118-139 (VEVESRPKKVASKSKSQKGSAR). The segment covering 125 to 139 (KKVASKSKSQKGSAR) has biased composition (basic residues).

Belongs to the universal ribosomal protein uL22 family. As to quaternary structure, part of the 50S ribosomal subunit.

Its function is as follows. This protein binds specifically to 23S rRNA; its binding is stimulated by other ribosomal proteins, e.g. L4, L17, and L20. It is important during the early stages of 50S assembly. It makes multiple contacts with different domains of the 23S rRNA in the assembled 50S subunit and ribosome. Functionally, the globular domain of the protein is located near the polypeptide exit tunnel on the outside of the subunit, while an extended beta-hairpin is found that lines the wall of the exit tunnel in the center of the 70S ribosome. This Saccharopolyspora erythraea (strain ATCC 11635 / DSM 40517 / JCM 4748 / NBRC 13426 / NCIMB 8594 / NRRL 2338) protein is Large ribosomal subunit protein uL22.